The following is a 500-amino-acid chain: Sulfate adenylyltransferase (500 aa).

Residues 1–165 (MLSPHGGILQ…LEAIQLPAHY (165 aa)) are N-terminal. The interval 166 to 390 (DYLNLRKSPA…LRQYNPPRYR (225 aa)) is catalytic. Position 193 (Q193) interacts with sulfate. ATP is bound by residues 193–196 (QTRN) and 287–290 (GRDH). Catalysis depends on residues T194, R195, and N196. Sulfate is bound at residue R195. A291 lines the sulfate pocket. Position 329 (I329) interacts with ATP. Positions 391–500 (QGFVIVVNHE…FLEDNKFFQF (110 aa)) are required for oligomerization; adenylyl-sulfate kinase-like.

Belongs to the sulfate adenylyltransferase family. As to quaternary structure, homohexamer. Dimer of trimers.

The protein resides in the cytoplasm. It catalyses the reaction sulfate + ATP + H(+) = adenosine 5'-phosphosulfate + diphosphate. Its pathway is sulfur metabolism; hydrogen sulfide biosynthesis; sulfite from sulfate: step 1/3. Catalyzes the first intracellular reaction of sulfate assimilation, forming adenosine-5'-phosphosulfate (APS) from inorganic sulfate and ATP. Plays an important role in sulfate activation as a component of the biosynthesis pathway of sulfur-containing amino acids. The polypeptide is Sulfate adenylyltransferase (Eremothecium gossypii (strain ATCC 10895 / CBS 109.51 / FGSC 9923 / NRRL Y-1056) (Yeast)).